Here is a 352-residue protein sequence, read N- to C-terminus: 4-hydroxy-2-oxovalerate aldolase (352 aa).

Residues 13–265 (VRLTDTSLRD…KTGIDFFDIA (253 aa)) form the Pyruvate carboxyltransferase domain. Position 21–22 (21–22 (RD)) interacts with substrate. A Mn(2+)-binding site is contributed by D22. Catalysis depends on H25, which acts as the Proton acceptor. S175 and H204 together coordinate substrate. The Mn(2+) site is built by H204 and H206. Position 295 (Y295) interacts with substrate.

The protein belongs to the 4-hydroxy-2-oxovalerate aldolase family.

The catalysed reaction is (S)-4-hydroxy-2-oxopentanoate = acetaldehyde + pyruvate. The sequence is that of 4-hydroxy-2-oxovalerate aldolase from Mycobacterium avium (strain 104).